A 130-amino-acid polypeptide reads, in one-letter code: Protein ApaG (130 aa).

Residues 3–127 form the ApaG domain; sequence RAVTRNIEVQ…FSLDLPGTRR (125 aa).

This chain is Protein ApaG, found in Mesorhizobium japonicum (strain LMG 29417 / CECT 9101 / MAFF 303099) (Mesorhizobium loti (strain MAFF 303099)).